Here is a 609-residue protein sequence, read N- to C-terminus: mRNA-decapping enzyme 1B (609 aa).

Alanine 2 is subject to N-acetylalanine. Residue serine 147 is modified to Phosphoserine. Tyrosine 191 is subject to Phosphotyrosine. Disordered regions lie at residues 201-222 (PVKP…LDPE) and 243-264 (TVEP…LPIR). Residues 205 to 219 (SENQQQRIPQPNQTL) are compositionally biased toward polar residues. Phosphoserine is present on residues serine 272 and serine 333. Disordered stretches follow at residues 326–345 (TGPV…GVQN) and 359–438 (TPGA…SSGV). Polar residues predominate over residues 336–345 (NIGTSRGVQN). A compositionally biased stretch (low complexity) spans 368–378 (PSTPAPASSAA). Residue threonine 389 is modified to Phosphothreonine. Polar residues predominate over residues 418–438 (QSTLPRQTLPISGNQTGSSGV). Serine 440 and serine 503 each carry phosphoserine.

This sequence belongs to the DCP1 family. As to quaternary structure, interacts with DCP1A.

The protein localises to the cytoplasm. It is found in the nucleus. The enzyme catalyses a 5'-end (N(7)-methyl 5'-triphosphoguanosine)-ribonucleoside in mRNA + H2O = N(7)-methyl-GDP + a 5'-end phospho-ribonucleoside in mRNA + 2 H(+). Its function is as follows. May play a role in the degradation of mRNAs, both in normal mRNA turnover and in nonsense-mediated mRNA decay. May remove the 7-methyl guanine cap structure from mRNA molecules, yielding a 5'-phosphorylated mRNA fragment and 7m-GDP. The protein is mRNA-decapping enzyme 1B (DCP1B) of Pongo abelii (Sumatran orangutan).